The following is a 430-amino-acid chain: Adenylosuccinate synthetase (430 aa).

GTP-binding positions include 11–17 (GDEGKGK) and 39–41 (GHS). Residue aspartate 12 is the Proton acceptor of the active site. Mg(2+) is bound by residues aspartate 12 and glycine 39. IMP contacts are provided by residues 12–15 (DEGK), 37–40 (NAGH), threonine 129, arginine 143, asparagine 221, threonine 236, and arginine 300. Residue histidine 40 is the Proton donor of the active site. Residue 296–302 (VSTGRKR) participates in substrate binding. Residues arginine 302, 328–330 (KLD), and 412–414 (GTG) each bind GTP.

The protein belongs to the adenylosuccinate synthetase family. Homodimer. Requires Mg(2+) as cofactor.

The protein localises to the cytoplasm. It catalyses the reaction IMP + L-aspartate + GTP = N(6)-(1,2-dicarboxyethyl)-AMP + GDP + phosphate + 2 H(+). Its pathway is purine metabolism; AMP biosynthesis via de novo pathway; AMP from IMP: step 1/2. Its function is as follows. Plays an important role in the de novo pathway and in the salvage pathway of purine nucleotide biosynthesis. Catalyzes the first committed step in the biosynthesis of AMP from IMP. This Sordaria macrospora (strain ATCC MYA-333 / DSM 997 / K(L3346) / K-hell) protein is Adenylosuccinate synthetase.